The following is a 544-amino-acid chain: MDSQRNLLLIALLFVTFMLWQAWETDKNPPATTQTIQQATNAVTGDATNQGVPASGQGKLITVKTDVLSLTINTRGGDVEQAHLLAYPDILGSDKPFHLLETTSAFVYQAQSGLTGKNGPDNPANGSRPLFVTTQDSFELADGQSELRIPMTYTAADGVTYTKTFVLKRGDYALNVDYSVNNTSAQPLELTLFGQLKQSIDLPKHRDTGSNNFALHTYRGAAFSSSEDKYKKYSFSDMDEGLNITTNSGWVAMLQQYFATAWIPTTAGANTFYTSKLGNGQAAIGFKAAPVIIAAGSQQNLNATLWVGPEIQDKMAAVAPHLDLTVDYGWLWFISQPLFKLLKFLHGFIGNWGFSIIAITFIVRGVMYPLTKAQYTSMAKMRLLQPKLQAMRERIGDDKQRMSQEMMALYKSEKVNPLGGCLPLVIQMPIFLALYYMLMGSVELRHAPFALWIHDLSAQDPYYILPILMGVTMFFIQKMSPTTVTDPMQQKIMTYMPVIFTVFFLWFPSGLVMYYIVSNLVTILQQQLIYRGLEKRGLHSREKK.

A run of 5 helical transmembrane segments spans residues 6 to 26, 343 to 363, 418 to 438, 456 to 476, and 497 to 517; these read NLLL…WETD, KFLH…TFIV, LGGC…YYML, LSAQ…MFFI, and PVIF…YYIV.

This sequence belongs to the OXA1/ALB3/YidC family. Type 1 subfamily. As to quaternary structure, interacts with the Sec translocase complex via SecD. Specifically interacts with transmembrane segments of nascent integral membrane proteins during membrane integration.

The protein resides in the cell inner membrane. Functionally, required for the insertion and/or proper folding and/or complex formation of integral membrane proteins into the membrane. Involved in integration of membrane proteins that insert both dependently and independently of the Sec translocase complex, as well as at least some lipoproteins. Aids folding of multispanning membrane proteins. This is Membrane protein insertase YidC from Pectobacterium atrosepticum (strain SCRI 1043 / ATCC BAA-672) (Erwinia carotovora subsp. atroseptica).